The chain runs to 160 residues: Transcription elongation factor GreA (160 aa).

Residues 14-76 are a coiled coil; it reads VKKLEEELEY…QLENMLKNAS (63 aa).

This sequence belongs to the GreA/GreB family.

Necessary for efficient RNA polymerase transcription elongation past template-encoded arresting sites. The arresting sites in DNA have the property of trapping a certain fraction of elongating RNA polymerases that pass through, resulting in locked ternary complexes. Cleavage of the nascent transcript by cleavage factors such as GreA or GreB allows the resumption of elongation from the new 3'terminus. GreA releases sequences of 2 to 3 nucleotides. This is Transcription elongation factor GreA from Clostridium botulinum (strain Okra / Type B1).